The following is an 858-amino-acid chain: Adenylate cyclase, germination specific (858 aa).

Residues M1 to P18 lie on the Cytoplasmic side of the membrane. Residues V19–M41 traverse the membrane as a helical; Signal-anchor for type II membrane protein segment. The Extracellular portion of the chain corresponds to H42 to K858. The CHASE domain occupies V86–T317. The region spanning C396–E526 is the Guanylate cyclase domain. Residues D401, I402, and D445 each contribute to the Mg(2+) site. Disordered regions lie at residues Y650–T691, S767–E803, and E827–K858. Composition is skewed to low complexity over residues S767–N778, G788–N797, and D834–D849.

Belongs to the adenylyl cyclase class-4/guanylyl cyclase family.

The protein resides in the membrane. It catalyses the reaction ATP = 3',5'-cyclic AMP + diphosphate. Insensitive to guanine nucleotides. In terms of biological role, has a large extracellular domain which may be involved in the recognition of an extracellular signal present during germination, leading to activation or inhibition of cAMP synthesis by the cytoplasmic domain. This is Adenylate cyclase, germination specific (acgA) from Dictyostelium discoideum (Social amoeba).